A 287-amino-acid chain; its full sequence is Survival motor neuron protein (287 aa).

The tract at residues 1–28 (MGGGGGGFPEPEDSVLFRRGTGESDDSD) is disordered. The P1 (binding site for GEMIN2) stretch occupies residues 9–40 (PEPEDSVLFRRGTGESDDSDVWDDTALIKAYD). The residue at position 21 (T21) is a Phosphothreonine. Residues S24 and S27 each carry the phosphoserine modification. Residue K47 forms a Glycyl lysine isopeptide (Lys-Gly) (interchain with G-Cter in SUMO2) linkage. Disordered stretches follow at residues 51–86 (KNGDISEASEKPKGTPKRKSAKNKSQRKNTTSPSKQ) and 149–221 (NAQE…PPPH). The span at 64–77 (GTPKRKSAKNKSQR) shows a compositional bias: basic residues. At T65 the chain carries Phosphothreonine. Residue T80 is modified to Phosphothreonine; by PKA. The 61-residue stretch at 86 to 146 (QWKVGDNCCA…LSPTSEVANI (61 aa)) folds into the Tudor domain. The interval 92–204 (NCCAIWSEDG…MPRSGLGPGK (113 aa)) is required for interaction with RPP20/POP7. Positions 149 to 160 (NAQENENESQIS) are enriched in low complexity. Residues 167 to 179 (SSRSPLNKPNNIR) show a composition bias toward polar residues. K204 participates in a covalent cross-link: Glycyl lysine isopeptide (Lys-Gly) (interchain with G-Cter in SUMO2). The segment covering 211-221 (GPPPPPPPPPH) has biased composition (pro residues). A P2 (binding site for SM B) region spans residues 234 to 261 (PPMIPPPPPICPDSLDDADALGSMLISW). Residues 273–287 (GFKQSQKEGRYSHFN) form a required for interaction with SYNCRIP region.

This sequence belongs to the SMN family. As to quaternary structure, homooligomer; may form higher order homooligomers in the dimer to octamer range. Part of the core SMN complex that contains SMN1, GEMIN2/SIP1, DDX20/GEMIN3, GEMIN4, GEMIN5, GEMIN6, GEMIN7, GEMIN8 and STRAP/UNRIP. Part of the SMN-Sm complex that contains SMN1, GEMIN2/SIP1, DDX20/GEMIN3, GEMIN4, GEMIN5, GEMIN6, GEMIN7, GEMIN8, STRAP/UNRIP and the Sm proteins SNRPB, SNRPD1, SNRPD2, SNRPD3, SNRPE, SNRPF and SNRPG. Component of an import snRNP complex composed of KPNB1, RNUT1, SMN1 and ZNF259. Interacts with DDX20, FBL, NOLA1, RNUT1, SYNCRIP and with several spliceosomal snRNP core Sm proteins, including SNRPB, SNRPD1, SNRPD2, SNRPD3, SNRPE and ILF3. Interacts with GEMIN2; the interaction is direct. Interacts with GEMIN3; the interaction is direct. Interacts with GEMIN8; the interaction is direct. Interacts with SNRPB; the interaction is direct. Interacts (via Tudor domain) with SNRPD1 (via C-terminus); the interaction is direct. Interacts with SNRPD2; the interaction is direct. Interacts (via Tudor domain) with SNRPD3 (via C-terminus); the interaction is direct. Interacts with SNRPE; the interaction is direct. Interacts with OSTF1, LSM10, LSM11 and RPP20/POP7. Interacts (via C-terminal region) with ZPR1 (via C-terminal region). Interacts (via Tudor domain) with COIL. Interacts with SETX; recruits SETX to POLR2A. Interacts with POLR2A (via the C-terminal domain (CTD)). Interacts with PRMT5. Interacts with XRN2. Interacts (via C-terminus) with FMR1 (via C-terminus); the interaction is direct and occurs in a RNA-independent manner. Interacts (via Tudor domain) with SF3B2 ('Arg-508'-methylated form). Interacts with WRAP53/TCAB1. Interacts (via Tudor domain) with ELAVL4 in an RNA-independent manner; the interaction is required for localization of ELAVL4 to RNA granules. Interacts with FRG1.

The protein resides in the nucleus. The protein localises to the gem. It is found in the cajal body. It localises to the cytoplasm. Its subcellular location is the cytoplasmic granule. The protein resides in the perikaryon. The protein localises to the cell projection. It is found in the neuron projection. It localises to the axon. Its subcellular location is the myofibril. The protein resides in the sarcomere. The protein localises to the z line. Functionally, the SMN complex catalyzes the assembly of small nuclear ribonucleoproteins (snRNPs), the building blocks of the spliceosome, and thereby plays an important role in the splicing of cellular pre-mRNAs. Most spliceosomal snRNPs contain a common set of Sm proteins SNRPB, SNRPD1, SNRPD2, SNRPD3, SNRPE, SNRPF and SNRPG that assemble in a heptameric protein ring on the Sm site of the small nuclear RNA to form the core snRNP (Sm core). In the cytosol, the Sm proteins SNRPD1, SNRPD2, SNRPE, SNRPF and SNRPG are trapped in an inactive 6S pICln-Sm complex by the chaperone CLNS1A that controls the assembly of the core snRNP. To assemble core snRNPs, the SMN complex accepts the trapped 5Sm proteins from CLNS1A forming an intermediate. Binding of snRNA inside 5Sm ultimately triggers eviction of the SMN complex, thereby allowing binding of SNRPD3 and SNRPB to complete assembly of the core snRNP. Within the SMN complex, SMN1 acts as a structural backbone and together with GEMIN2 it gathers the Sm complex subunits. Ensures the correct splicing of U12 intron-containing genes that may be important for normal motor and proprioceptive neurons development. Also required for resolving RNA-DNA hybrids created by RNA polymerase II, that form R-loop in transcription terminal regions, an important step in proper transcription termination. May also play a role in the metabolism of small nucleolar ribonucleoprotein (snoRNPs). In Bos taurus (Bovine), this protein is Survival motor neuron protein (SMN1).